Here is a 96-residue protein sequence, read N- to C-terminus: Translation initiation factor 1A 1 (96 aa).

The S1-like domain occupies 8–82; sequence GSHDLRMPDD…EKGDITWRYE (75 aa).

This sequence belongs to the eIF-1A family.

Its function is as follows. Seems to be required for maximal rate of protein biosynthesis. Enhances ribosome dissociation into subunits and stabilizes the binding of the initiator Met-tRNA(I) to 40 S ribosomal subunits. In Haloquadratum walsbyi (strain DSM 16790 / HBSQ001), this protein is Translation initiation factor 1A 1.